The chain runs to 1492 residues: DNA polymerase alpha catalytic subunit (1492 aa).

Disordered stretches follow at residues 34-112, 162-195, and 210-234; these read DFIV…VEQS, SVTLESREEQERRRQSEQLKQQANIGQNQSDVNP, and ANSYQSKQNSHSVSKSKPGDHEMAN. Positions 42-55 are enriched in basic and acidic residues; the sequence is YGYRDHGGEIWDRD. Residues 93–105 are compositionally biased toward polar residues; it reads NAASTNPSAQQKP. Residues 166–178 show a composition bias toward basic and acidic residues; the sequence is ESREEQERRRQSE. Polar residues-rich tracts occupy residues 184–194 and 210–224; these read ANIGQNQSDVN and ANSYQSKQNSHSVSK. Zn(2+)-binding residues include cysteine 1314, cysteine 1317, cysteine 1341, cysteine 1344, cysteine 1375, cysteine 1380, cysteine 1393, and cysteine 1398. Residues 1314-1344 form a CysA-type zinc finger; it reads CPHCAHNYHFPGILVPSSNNTELTGLACVKC. The CysB motif signature appears at 1375–1398; it reads CKEPQCGMKTNQLLLNNKCIVKGC.

This sequence belongs to the DNA polymerase type-B family.

The protein localises to the nucleus. It catalyses the reaction DNA(n) + a 2'-deoxyribonucleoside 5'-triphosphate = DNA(n+1) + diphosphate. Its function is as follows. Polymerase alpha in a complex with DNA primase is a replicative polymerase. This is DNA polymerase alpha catalytic subunit from Sterkiella nova (Ciliate).